We begin with the raw amino-acid sequence, 948 residues long: Bifunctional uridylyltransferase/uridylyl-removing enzyme (948 aa).

A uridylyltransferase region spans residues 1-372 (METHHIDFST…RFANRSRKIP (372 aa)). The tract at residues 373–728 (GTVEFVEDRG…VRTDSFHAIT (356 aa)) is uridylyl-removing. Positions 489-605 (VDEHLIRAVE…IDFADRVQSL (117 aa)) constitute an HD domain. ACT domains lie at 729-810 (EITV…EVIA) and 840-921 (VIEV…ERMP).

Belongs to the GlnD family. The cofactor is Mg(2+).

The catalysed reaction is [protein-PII]-L-tyrosine + UTP = [protein-PII]-uridylyl-L-tyrosine + diphosphate. It catalyses the reaction [protein-PII]-uridylyl-L-tyrosine + H2O = [protein-PII]-L-tyrosine + UMP + H(+). With respect to regulation, uridylyltransferase (UTase) activity is inhibited by glutamine, while glutamine activates uridylyl-removing (UR) activity. In terms of biological role, modifies, by uridylylation and deuridylylation, the PII regulatory proteins (GlnB and homologs), in response to the nitrogen status of the cell that GlnD senses through the glutamine level. Under low glutamine levels, catalyzes the conversion of the PII proteins and UTP to PII-UMP and PPi, while under higher glutamine levels, GlnD hydrolyzes PII-UMP to PII and UMP (deuridylylation). Thus, controls uridylylation state and activity of the PII proteins, and plays an important role in the regulation of nitrogen fixation and metabolism. In Rhizobium tropici, this protein is Bifunctional uridylyltransferase/uridylyl-removing enzyme.